We begin with the raw amino-acid sequence, 296 residues long: Large ribosomal subunit protein uL29m (296 aa).

Residues 1–19 constitute a mitochondrion transit peptide; that stretch reads MSITSIRALLRSAVSLART.

This sequence belongs to the universal ribosomal protein uL29 family. In terms of assembly, component of the mitochondrial large ribosomal subunit. Mature mitochondrial ribosomes consist of a small (37S) and a large (54S) subunit. The 37S subunit contains at least 33 different proteins and 1 molecule of RNA (15S). The 54S subunit contains at least 45 different proteins and 1 molecule of RNA (21S).

The protein resides in the mitochondrion. This chain is Large ribosomal subunit protein uL29m (MRPL4), found in Lodderomyces elongisporus (strain ATCC 11503 / CBS 2605 / JCM 1781 / NBRC 1676 / NRRL YB-4239) (Yeast).